A 182-amino-acid polypeptide reads, in one-letter code: ATP synthase subunit delta (182 aa).

The protein belongs to the ATPase delta chain family. As to quaternary structure, F-type ATPases have 2 components, F(1) - the catalytic core - and F(0) - the membrane proton channel. F(1) has five subunits: alpha(3), beta(3), gamma(1), delta(1), epsilon(1). F(0) has three main subunits: a(1), b(2) and c(10-14). The alpha and beta chains form an alternating ring which encloses part of the gamma chain. F(1) is attached to F(0) by a central stalk formed by the gamma and epsilon chains, while a peripheral stalk is formed by the delta and b chains.

The protein localises to the cell inner membrane. In terms of biological role, f(1)F(0) ATP synthase produces ATP from ADP in the presence of a proton or sodium gradient. F-type ATPases consist of two structural domains, F(1) containing the extramembraneous catalytic core and F(0) containing the membrane proton channel, linked together by a central stalk and a peripheral stalk. During catalysis, ATP synthesis in the catalytic domain of F(1) is coupled via a rotary mechanism of the central stalk subunits to proton translocation. Its function is as follows. This protein is part of the stalk that links CF(0) to CF(1). It either transmits conformational changes from CF(0) to CF(1) or is implicated in proton conduction. In Histophilus somni (strain 129Pt) (Haemophilus somnus), this protein is ATP synthase subunit delta.